The sequence spans 305 residues: Ferredoxin--NADP reductase (305 aa).

Positions 31, 42, 82, and 274 each coordinate FAD.

This sequence belongs to the ferredoxin--NADP reductase type 2 family. Homodimer. The cofactor is FAD.

The enzyme catalyses 2 reduced [2Fe-2S]-[ferredoxin] + NADP(+) + H(+) = 2 oxidized [2Fe-2S]-[ferredoxin] + NADPH. In Ignicoccus hospitalis (strain KIN4/I / DSM 18386 / JCM 14125), this protein is Ferredoxin--NADP reductase.